Reading from the N-terminus, the 549-residue chain is Glucose-6-phosphate isomerase (549 aa).

Glutamate 352 functions as the Proton donor in the catalytic mechanism. Catalysis depends on residues histidine 383 and lysine 511.

This sequence belongs to the GPI family.

The protein localises to the cytoplasm. The enzyme catalyses alpha-D-glucose 6-phosphate = beta-D-fructose 6-phosphate. The protein operates within carbohydrate biosynthesis; gluconeogenesis. It functions in the pathway carbohydrate degradation; glycolysis; D-glyceraldehyde 3-phosphate and glycerone phosphate from D-glucose: step 2/4. Its function is as follows. Catalyzes the reversible isomerization of glucose-6-phosphate to fructose-6-phosphate. The sequence is that of Glucose-6-phosphate isomerase from Methylocella silvestris (strain DSM 15510 / CIP 108128 / LMG 27833 / NCIMB 13906 / BL2).